The sequence spans 554 residues: ATP synthase subunit alpha (554 aa).

173 to 180 (GDRQTGKT) is an ATP binding site. Residues 531–554 (SHLAAEKVRKHVPPSKPTTQRTAG) form a disordered region.

The protein belongs to the ATPase alpha/beta chains family. F-type ATPases have 2 components, CF(1) - the catalytic core - and CF(0) - the membrane proton channel. CF(1) has five subunits: alpha(3), beta(3), gamma(1), delta(1), epsilon(1). CF(0) has three main subunits: a(1), b(2) and c(9-12). The alpha and beta chains form an alternating ring which encloses part of the gamma chain. CF(1) is attached to CF(0) by a central stalk formed by the gamma and epsilon chains, while a peripheral stalk is formed by the delta and b chains.

The protein localises to the cell membrane. It carries out the reaction ATP + H2O + 4 H(+)(in) = ADP + phosphate + 5 H(+)(out). Its function is as follows. Produces ATP from ADP in the presence of a proton gradient across the membrane. The alpha chain is a regulatory subunit. This Acidothermus cellulolyticus (strain ATCC 43068 / DSM 8971 / 11B) protein is ATP synthase subunit alpha.